The primary structure comprises 123 residues: MPSTGTLVIIFAIVLILCIMLLFFYKTAEAGKSGVLPPPIPPPTPPPPKKKYDHNEYMEKTDLEPEVKKNHRKWANEAEHLISSSVKGLENLDETAFLANHKGHGFRTFDHAKSLFKEFLKKY.

The chain crosses the membrane as a helical span at residues glycine 5–tyrosine 25. Positions lysine 32–aspartate 53 are disordered. Residues leucine 36–proline 47 show a composition bias toward pro residues.

This sequence belongs to the asfivirus CP123L family.

The protein localises to the host membrane. It localises to the virion. This is an uncharacterized protein from Ornithodoros (relapsing fever ticks).